Reading from the N-terminus, the 166-residue chain is Lipoprotein signal peptidase (166 aa).

The next 4 membrane-spanning stretches (helical) occupy residues 9 to 29, 45 to 65, 71 to 91, and 100 to 120; these read ASGA…FDQL, ALTS…FGFL, WQRW…CFLL, and FSVS…DRLV. Residues aspartate 126 and aspartate 144 contribute to the active site. Residues 135–155 traverse the membrane as a helical segment; it reads WHFPAFNLADSAITVGAVLLI.

This sequence belongs to the peptidase A8 family.

It is found in the cell inner membrane. It catalyses the reaction Release of signal peptides from bacterial membrane prolipoproteins. Hydrolyzes -Xaa-Yaa-Zaa-|-(S,diacylglyceryl)Cys-, in which Xaa is hydrophobic (preferably Leu), and Yaa (Ala or Ser) and Zaa (Gly or Ala) have small, neutral side chains.. It participates in protein modification; lipoprotein biosynthesis (signal peptide cleavage). Functionally, this protein specifically catalyzes the removal of signal peptides from prolipoproteins. This Burkholderia cenocepacia (strain HI2424) protein is Lipoprotein signal peptidase.